A 133-amino-acid chain; its full sequence is FK506-binding protein 2 (133 aa).

Residues 1–20 (MKLLYCLLLVILALVGLSSG) form the signal peptide. A PPIase FKBP-type domain is found at 45–133 (GDKLKIHYTG…IFDVELIGIN (89 aa)).

This sequence belongs to the FKBP-type PPIase family.

The catalysed reaction is [protein]-peptidylproline (omega=180) = [protein]-peptidylproline (omega=0). Its activity is regulated as follows. Inhibited by both FK506 and rapamycin. In terms of biological role, PPIases accelerate the folding of proteins by catalyzing the cis-trans isomerization of proline imidic peptide bonds in oligopeptides. This chain is FK506-binding protein 2 (fkbp2), found in Dictyostelium discoideum (Social amoeba).